Here is a 502-residue protein sequence, read N- to C-terminus: Pentatricopeptide repeat-containing protein At4g01990, mitochondrial (502 aa).

The N-terminal 13 residues, Met-1–Cys-13, are a transit peptide targeting the mitochondrion. PPR repeat units lie at residues Asn-139–Ser-173, Asn-174–Pro-208, Cys-209–Ile-243, Ser-245–Asn-275, Val-280–Arg-310, Asn-315–Thr-345, and Asp-350–Cys-381.

It belongs to the PPR family. P subfamily.

The protein resides in the mitochondrion. The protein is Pentatricopeptide repeat-containing protein At4g01990, mitochondrial of Arabidopsis thaliana (Mouse-ear cress).